Consider the following 745-residue polypeptide: MFDVQREELIWGDRKLVLETGKTARQADGSVVATYGETTVLATVVAGKEPKAGIDFLPLTVNYQERAYAAGRIPGGYFKREGRPSEKETLVSRLIDRPIRPLFVEGWRNDTQVVVTVLSHDLENDPDIVAMVAASAALTLSGVPFMGPIGAARVGYLNGGYKLNPLVTEIAESTLDLVVAGTQDAVLMVESEAKELSEDVMLGAVMFGHKHFQPVIEAIIRLAEKAAKEPRDFTPPENADVEAAVLAVAETELREAYKKTVKQERYAAVDAVKAKVVAALCPAEGEQKFSPEKVKAAFKEAQSKVVRWNILDTGSRIDGRDVKTVRSIVSEVGVLPRAHGSSLFTRGETQALVVATLGTGEDEQFIDALEGTYKERFLLHYNFPPYSVGETGRMGSPGRREIGHGKLAWRAIRPVLPPAHEFPYTIRVVSEITESNGSSSMASVCGGSLSLMDAGVPLRRPVAGIAMGLILEGERFAVLSDILGDEDHLGDMDFKVAGSEEGITSLQMDIKIAGITEEIMKIALAQAKDGRAHILGEMSKALTAARPELGEYAPRIETMQIPTDKIRDVIGTGGKIIREIVEKTGAKINIEDTGIVKIASSDGKAIKAAYNWIRSIVAEPEAGTIYDGTIVKIMEFGAFVNFFGAKDGLVHISELAAQRVAKVGDVVKEGQKVKVKFLGADERGKIRLSMKVVDQETGEDLTEKLKAERAERGEPEREERSDRGDRGDRGPRRDRGERRRESSGE.

The Mg(2+) site is built by Asp-487 and Asp-493. The region spanning 554–613 (PRIETMQIPTDKIRDVIGTGGKIIREIVEKTGAKINIEDTGIVKIASSDGKAIKAAYNWI) is the KH domain. The region spanning 623–691 (GTIYDGTIVK…ERGKIRLSMK (69 aa)) is the S1 motif domain. Residues 695 to 745 (QETGEDLTEKLKAERAERGEPEREERSDRGDRGDRGPRRDRGERRRESSGE) form a disordered region. Residues 701–745 (LTEKLKAERAERGEPEREERSDRGDRGDRGPRRDRGERRRESSGE) show a composition bias toward basic and acidic residues.

The protein belongs to the polyribonucleotide nucleotidyltransferase family. It depends on Mg(2+) as a cofactor.

It localises to the cytoplasm. It carries out the reaction RNA(n+1) + phosphate = RNA(n) + a ribonucleoside 5'-diphosphate. Its function is as follows. Involved in mRNA degradation. Catalyzes the phosphorolysis of single-stranded polyribonucleotides processively in the 3'- to 5'-direction. The chain is Polyribonucleotide nucleotidyltransferase from Methylorubrum extorquens (strain CM4 / NCIMB 13688) (Methylobacterium extorquens).